Reading from the N-terminus, the 110-residue chain is Toxin HigB-2 (110 aa).

In terms of biological role, toxic component of a type II toxin-antitoxin (TA) system. Inhibits translation by cleavage of mRNA. The chain is Toxin HigB-2 (higB-2) from Vibrio cholerae serotype O1 (strain ATCC 39315 / El Tor Inaba N16961).